A 588-amino-acid chain; its full sequence is NADP-dependent malic enzyme 3 (588 aa).

Glycine 2 carries the post-translational modification N-acetylglycine. Tyrosine 136 serves as the catalytic Proton donor. NADP(+) is bound at residue arginine 189. Lysine 207 acts as the Proton acceptor in catalysis. Residues glutamate 279, aspartate 280, and aspartate 303 each coordinate a divalent metal cation. Residues aspartate 303, 332-348 (LFLG…ELIA), and asparagine 444 each bind NADP(+).

Belongs to the malic enzymes family. As to quaternary structure, homohexamers and homooctamers. The cofactor is Mg(2+). Requires Mn(2+) as cofactor. Mostly expressed in flowers, and, to a lower extent, in stems. In leaves and stems, restricted to the trichomes and trichome basal cells. Also present in the stipules flanking the base of the inflorescence bract leaves and in the meristematic zone of developing lateral roots. In flowers, present in pollen and the abscission zone of developing siliques.

The protein resides in the cytoplasm. The catalysed reaction is (S)-malate + NADP(+) = pyruvate + CO2 + NADPH. It catalyses the reaction oxaloacetate + H(+) = pyruvate + CO2. Slightly activated by succinate and aspartate. Repressed by fumarate, malate, oxaloacetate and glucose. This Arabidopsis thaliana (Mouse-ear cress) protein is NADP-dependent malic enzyme 3 (NADP-ME3).